Reading from the N-terminus, the 205-residue chain is Probable GTP-binding protein EngB (205 aa).

In terms of domain architecture, EngB-type G spans 22 to 198; that stretch reads HLPEYAFIGR…LSYIDEVNQD (177 aa). Residues 30-37, 57-61, 75-78, 142-145, and 177-179 contribute to the GTP site; these read GRSNVGKS, GKTQL, DLPG, TKAD, and TSA. Positions 37 and 59 each coordinate Mg(2+).

This sequence belongs to the TRAFAC class TrmE-Era-EngA-EngB-Septin-like GTPase superfamily. EngB GTPase family. Mg(2+) is required as a cofactor.

In terms of biological role, necessary for normal cell division and for the maintenance of normal septation. The protein is Probable GTP-binding protein EngB of Flavobacterium psychrophilum (strain ATCC 49511 / DSM 21280 / CIP 103535 / JIP02/86).